The following is a 1025-amino-acid chain: Multidrug resistance protein MdtC (1025 aa).

12 helical membrane-spanning segments follow: residues 3-23 (FFAL…AITL), 333-353 (EVEQ…FLFL), 360-380 (IIPA…MYLC), 387-407 (LSLM…IVVL), 431-451 (VGFT…PLLL), 463-483 (FAVT…TLTP), 528-548 (LVGV…ISIP), 853-873 (VILI…LYES), 875-895 (VHPL…LLAL), 897-917 (LFNA…IGIV), 953-973 (PIMM…LSGG), and 984-1004 (ITIV…TPVV).

This sequence belongs to the resistance-nodulation-cell division (RND) (TC 2.A.6) family. MdtC subfamily. In terms of assembly, part of a tripartite efflux system composed of MdtA, MdtB and MdtC. MdtC forms a heteromultimer with MdtB.

It is found in the cell inner membrane. In terms of biological role, the MdtABC tripartite complex confers resistance against novobiocin and deoxycholate. This is Multidrug resistance protein MdtC from Escherichia coli (strain SMS-3-5 / SECEC).